A 185-amino-acid chain; its full sequence is p53 apoptosis effector related to PMP-22 (185 aa).

4 helical membrane passes run 13-33 (WILP…IAAQ), 74-94 (VAAL…ISLV), 105-125 (LPFI…ALII), and 143-163 (WAYG…ILFC).

Belongs to the TMEM47 family.

It is found in the cell junction. The protein resides in the desmosome. Its subcellular location is the cell membrane. The protein localises to the cytoplasm. In terms of biological role, component of intercellular desmosome junctions. Positively regulates apoptosis in the early-stage embryo in response to UV irradiation, this is partially dependent on tp53 activation. Required for the survival of cell populations in the developing notochord and skin, therefore required for normal embryogenesis beyond 30 hpf. Acts as a positive regulator of endothelial cell apoptosis in response to blood flow-derived shear stress. The polypeptide is p53 apoptosis effector related to PMP-22 (Danio rerio (Zebrafish)).